Reading from the N-terminus, the 465-residue chain is MEEEDEEARALLAGGPDEADRGAPAAPGALPALCDPSRLAHRLLVLLLMCFLGFGSYFCYDNPAALQTQVKRDMQVNTTKFMLLYAWYSWPNVVLCFFGGFLIDRVFGIRWGTIIFSCFVCIGQVVFALGGIFNAFWLMEFGRFVFGIGGESLAVAQNTYAVSWFKGKELNLVFGLQLSMARIGSTVNMNLMGWLYSKIEALLGSAGHTTLGITLMIGGITCILSLICALALAYLDQRAERILHKEQGKTGEVIKLTDVKDFSLPLWLIFIICVCYYVAVFPFIGLGKVFFTEKFGFSSQAASAINSVVYVISAPMSPVFGLLVDKTGKNIIWVLCAVAATLVSHMMLAFTMWNPWIAMCLLGLSYSLLACALWPMVAFVVPEHQLGTAYGFMQSIQNLGLAIISIIAGMILDSRGYLFLEVFFIACVSLSLLSVVLLYLVNRAQGGNLNYSARQREEIKFSHTE.

The tract at residues 1 to 23 (MEEEDEEARALLAGGPDEADRGA) is disordered. Positions 11-12 (LL) match the Dileucine internalization motif motif. Helical transmembrane passes span 39–59 (LAHR…SYFC), 83–103 (LLYA…GFLI), 113–133 (TIIF…GGIF), 135–155 (AFWL…SLAV), 170–191 (LNLV…NMNL), 213–233 (ITLM…LALA), 266–286 (LWLI…FIGL), 303–323 (SAIN…FGLL), 331–351 (IIWV…LAFT), 361–381 (LLGL…AFVV), 392–412 (FMQS…GMIL), and 418–438 (LFLE…VVLL).

This sequence belongs to the major facilitator superfamily. Homodimer. Interacts with lysosomal protein GLMP (via lumenal domain); the interaction starts while both proteins are still in the endoplasmic reticulum and is required for stabilization of MFSD1 in lysosomes but has no direct effect on its targeting to lysosomes or transporter activity.

The protein resides in the lysosome membrane. The enzyme catalyses L-alpha-aminoacyl-L-arginine(out) = L-alpha-aminoacyl-L-arginine(in). The catalysed reaction is L-arginyl-L-alpha-amino acid(out) = L-arginyl-L-alpha-amino acid(in). It carries out the reaction L-arginyl-glycine(out) = L-arginyl-glycine(in). It catalyses the reaction L-alpha-aminoacyl-L-lysine(out) = L-alpha-aminoacyl-L-lysine(in). The enzyme catalyses L-aspartyl-L-lysine(out) = L-aspartyl-L-lysine(in). The catalysed reaction is L-alanyl-L-lysine(out) = L-alanyl-L-lysine(in). It carries out the reaction L-lysyl-L-alpha-amino acid(out) = L-lysyl-L-alpha-amino acid(in). It catalyses the reaction L-lysyl-L-alanine(out) = L-lysyl-L-alanine(in). The enzyme catalyses L-lysyl-L-lysine(out) = L-lysyl-L-lysine(in). The catalysed reaction is L-lysyl-glycine(out) = L-lysyl-glycine(in). It carries out the reaction L-alpha-aminoacyl-L-histidine(out) = L-alpha-aminoacyl-L-histidine(in). It catalyses the reaction L-histidyl-L-alpha-amino acid(out) = L-histidyl-L-alpha-amino acid(in). The enzyme catalyses L-histidyl-glycine(out) = L-histidyl-glycine(in). Functionally, lysosomal dipeptide uniporter that selectively exports lysine, arginine or histidine-containing dipeptides with a net positive charge from the lysosome lumen into the cytosol. Could play a role in a specific type of protein O-glycosylation indirectly regulating macrophages migration and tissue invasion. Also essential for liver homeostasis. This is Lysosomal dipeptide transporter MFSD1 from Homo sapiens (Human).